The following is a 498-amino-acid chain: Putative BTB/POZ domain-containing protein L67 (498 aa).

Positions 26–96 (SDINITLSDN…MYGISLSEIN (71 aa)) constitute a BTB domain.

It belongs to the mimivirus BTB/WD family.

This Acanthamoeba polyphaga (Amoeba) protein is Putative BTB/POZ domain-containing protein L67.